Here is a 269-residue protein sequence, read N- to C-terminus: Type II methyltransferase M2.LlaDCHI (269 aa).

Belongs to the N(4)/N(6)-methyltransferase family.

The enzyme catalyses a 2'-deoxyadenosine in DNA + S-adenosyl-L-methionine = an N(6)-methyl-2'-deoxyadenosine in DNA + S-adenosyl-L-homocysteine + H(+). In terms of biological role, a beta subtype methylase, recognizes the double-stranded sequence 5'-GATC-3', methylates A-2 on both strands, and protects the DNA from cleavage by the LlaDCHI endonuclease. The chain is Type II methyltransferase M2.LlaDCHI from Lactococcus lactis subsp. cremoris (Streptococcus cremoris).